Reading from the N-terminus, the 213-residue chain is RNA polymerase I subunit H (213 aa).

Residues 1–19 (MVERMKKDTGDETKTKVQE) are compositionally biased toward basic and acidic residues. The tract at residues 1–70 (MVERMKKDTG…AREFTDKPWR (70 aa)) is disordered. A compositionally biased stretch (pro residues) spans 21–31 (PPSPSPPPPPP). Composition is skewed to basic and acidic residues over residues 43 to 53 (VPEREKKQIER) and 60 to 69 (HAREFTDKPW).

Expressed during spermatogenesis, initially at pachytene stage with abundance increasing in round spermatids and decreasing again during spermatid elongation.

May be involved in male sterility. This Mus musculus (Mouse) protein is RNA polymerase I subunit H.